A 369-amino-acid polypeptide reads, in one-letter code: Anhydro-N-acetylmuramic acid kinase (369 aa).

12–19 (GTSLDGVD) contacts ATP.

Belongs to the anhydro-N-acetylmuramic acid kinase family.

The enzyme catalyses 1,6-anhydro-N-acetyl-beta-muramate + ATP + H2O = N-acetyl-D-muramate 6-phosphate + ADP + H(+). It participates in amino-sugar metabolism; 1,6-anhydro-N-acetylmuramate degradation. It functions in the pathway cell wall biogenesis; peptidoglycan recycling. Catalyzes the specific phosphorylation of 1,6-anhydro-N-acetylmuramic acid (anhMurNAc) with the simultaneous cleavage of the 1,6-anhydro ring, generating MurNAc-6-P. Is required for the utilization of anhMurNAc either imported from the medium or derived from its own cell wall murein, and thus plays a role in cell wall recycling. The polypeptide is Anhydro-N-acetylmuramic acid kinase (Escherichia coli (strain K12 / MC4100 / BW2952)).